A 546-amino-acid chain; its full sequence is CTP synthase (546 aa).

Residues 1–266 (MTTRYIFVTG…DDLVVKRFGL (266 aa)) form an amidoligase domain region. A CTP-binding site is contributed by Ser14. Ser14 contacts UTP. ATP-binding positions include 15–20 (SLGKGI) and Asp72. Mg(2+)-binding residues include Asp72 and Glu140. CTP is bound by residues 147 to 149 (DIE), 187 to 192 (KTKPTQ), and Lys223. Residues 187 to 192 (KTKPTQ) and Lys223 contribute to the UTP site. Residue 239–241 (KDV) participates in ATP binding. One can recognise a Glutamine amidotransferase type-1 domain in the interval 291-542 (VIGMVGKYIE…VAAASAHQKR (252 aa)). Gly352 is a binding site for L-glutamine. Catalysis depends on Cys379, which acts as the Nucleophile; for glutamine hydrolysis. L-glutamine contacts are provided by residues 380-383 (LGMQ), Glu403, and Arg470. Residues His515 and Glu517 contribute to the active site.

The protein belongs to the CTP synthase family. Homotetramer.

It carries out the reaction UTP + L-glutamine + ATP + H2O = CTP + L-glutamate + ADP + phosphate + 2 H(+). The enzyme catalyses L-glutamine + H2O = L-glutamate + NH4(+). The catalysed reaction is UTP + NH4(+) + ATP = CTP + ADP + phosphate + 2 H(+). The protein operates within pyrimidine metabolism; CTP biosynthesis via de novo pathway; CTP from UDP: step 2/2. With respect to regulation, allosterically activated by GTP, when glutamine is the substrate; GTP has no effect on the reaction when ammonia is the substrate. The allosteric effector GTP functions by stabilizing the protein conformation that binds the tetrahedral intermediate(s) formed during glutamine hydrolysis. Inhibited by the product CTP, via allosteric rather than competitive inhibition. Functionally, catalyzes the ATP-dependent amination of UTP to CTP with either L-glutamine or ammonia as the source of nitrogen. Regulates intracellular CTP levels through interactions with the four ribonucleotide triphosphates. The sequence is that of CTP synthase from Shewanella sp. (strain MR-7).